The chain runs to 490 residues: Ribulose bisphosphate carboxylase large chain (490 aa).

Substrate is bound by residues Asn-127 and Thr-177. The active-site Proton acceptor is Lys-179. Lys-181 contacts substrate. Positions 205, 207, and 208 each coordinate Mg(2+). Lys-205 carries the post-translational modification N6-carboxylysine. His-297 functions as the Proton acceptor in the catalytic mechanism. Arg-298, His-330, and Ser-382 together coordinate substrate.

It belongs to the RuBisCO large chain family. Type I subfamily. As to quaternary structure, heterohexadecamer of 8 large chains and 8 small chains. Mg(2+) is required as a cofactor.

The protein localises to the plastid. The protein resides in the chloroplast. The enzyme catalyses 2 (2R)-3-phosphoglycerate + 2 H(+) = D-ribulose 1,5-bisphosphate + CO2 + H2O. The catalysed reaction is D-ribulose 1,5-bisphosphate + O2 = 2-phosphoglycolate + (2R)-3-phosphoglycerate + 2 H(+). Its function is as follows. RuBisCO catalyzes two reactions: the carboxylation of D-ribulose 1,5-bisphosphate, the primary event in carbon dioxide fixation, as well as the oxidative fragmentation of the pentose substrate in the photorespiration process. Both reactions occur simultaneously and in competition at the same active site. In Detonula confervacea (Marine diatom), this protein is Ribulose bisphosphate carboxylase large chain.